The chain runs to 285 residues: Energy-coupling factor transporter ATP-binding protein EcfA2 (285 aa).

Residues 3–245 (IKFKKVDYIY…RKWLKKHNLS (243 aa)) form the ABC transporter domain. Residue 40–47 (GHTGSGKS) coordinates ATP.

This sequence belongs to the ABC transporter superfamily. Energy-coupling factor EcfA family. Forms a stable energy-coupling factor (ECF) transporter complex composed of 2 membrane-embedded substrate-binding proteins (S component), 2 ATP-binding proteins (A component) and 2 transmembrane proteins (T component).

Its subcellular location is the cell membrane. Functionally, ATP-binding (A) component of a common energy-coupling factor (ECF) ABC-transporter complex. Unlike classic ABC transporters this ECF transporter provides the energy necessary to transport a number of different substrates. The polypeptide is Energy-coupling factor transporter ATP-binding protein EcfA2 (Lactobacillus acidophilus (strain ATCC 700396 / NCK56 / N2 / NCFM)).